A 303-amino-acid chain; its full sequence is Glutathione transport system permease protein GsiD (303 aa).

The next 6 membrane-spanning stretches (helical) occupy residues 40–60 (AMTAALFVILLIVVAIFARWI), 105–125 (LAAGVFAVFIGAAIGTLLGLL), 144–164 (LFAFPGILLAIAVVAVLGSGI), 165–185 (ANVIIAVAIFSIPAFARLVRG), 222–242 (IVVFFTMRIGTSIISAASLSF), and 266–286 (VIAPHVAVFPVLAIFLTVLAF). One can recognise an ABC transmembrane type-1 domain in the interval 101 to 290 (AQISLAAGVF…LTVLAFNLLG (190 aa)).

The protein belongs to the binding-protein-dependent transport system permease family. As to quaternary structure, the complex is composed of two ATP-binding proteins (GsiA), two transmembrane proteins (GsiC and GsiD) and a solute-binding protein (GsiB).

It is found in the cell inner membrane. In terms of biological role, part of the ABC transporter complex GsiABCD involved in glutathione import. Probably responsible for the translocation of the substrate across the membrane. This Shigella dysenteriae serotype 1 (strain Sd197) protein is Glutathione transport system permease protein GsiD.